The sequence spans 264 residues: GTP cyclohydrolase FolE2 (264 aa).

This sequence belongs to the GTP cyclohydrolase IV family.

The catalysed reaction is GTP + H2O = 7,8-dihydroneopterin 3'-triphosphate + formate + H(+). The protein operates within cofactor biosynthesis; 7,8-dihydroneopterin triphosphate biosynthesis; 7,8-dihydroneopterin triphosphate from GTP: step 1/1. In terms of biological role, converts GTP to 7,8-dihydroneopterin triphosphate. The polypeptide is GTP cyclohydrolase FolE2 (Nitratidesulfovibrio vulgaris (strain ATCC 29579 / DSM 644 / CCUG 34227 / NCIMB 8303 / VKM B-1760 / Hildenborough) (Desulfovibrio vulgaris)).